Here is a 210-residue protein sequence, read N- to C-terminus: Protein GrpE (210 aa).

Belongs to the GrpE family. As to quaternary structure, homodimer.

The protein localises to the cytoplasm. Functionally, participates actively in the response to hyperosmotic and heat shock by preventing the aggregation of stress-denatured proteins, in association with DnaK and GrpE. It is the nucleotide exchange factor for DnaK and may function as a thermosensor. Unfolded proteins bind initially to DnaJ; upon interaction with the DnaJ-bound protein, DnaK hydrolyzes its bound ATP, resulting in the formation of a stable complex. GrpE releases ADP from DnaK; ATP binding to DnaK triggers the release of the substrate protein, thus completing the reaction cycle. Several rounds of ATP-dependent interactions between DnaJ, DnaK and GrpE are required for fully efficient folding. The chain is Protein GrpE from Rhizobium leguminosarum bv. trifolii (strain WSM2304).